A 190-amino-acid chain; its full sequence is Protein GrpE (190 aa).

The protein belongs to the GrpE family. As to quaternary structure, homodimer.

Its subcellular location is the cytoplasm. In terms of biological role, participates actively in the response to hyperosmotic and heat shock by preventing the aggregation of stress-denatured proteins, in association with DnaK and GrpE. It is the nucleotide exchange factor for DnaK and may function as a thermosensor. Unfolded proteins bind initially to DnaJ; upon interaction with the DnaJ-bound protein, DnaK hydrolyzes its bound ATP, resulting in the formation of a stable complex. GrpE releases ADP from DnaK; ATP binding to DnaK triggers the release of the substrate protein, thus completing the reaction cycle. Several rounds of ATP-dependent interactions between DnaJ, DnaK and GrpE are required for fully efficient folding. The protein is Protein GrpE of Streptococcus agalactiae serotype III (strain NEM316).